We begin with the raw amino-acid sequence, 468 residues long: Probable Xaa-Pro aminopeptidase PEPP (468 aa).

Mn(2+) contacts are provided by aspartate 264, aspartate 275, glutamate 398, and glutamate 438.

Belongs to the peptidase M24B family. Requires Mn(2+) as cofactor.

It carries out the reaction Release of any N-terminal amino acid, including proline, that is linked to proline, even from a dipeptide or tripeptide.. In terms of biological role, catalyzes the removal of a penultimate prolyl residue from the N-termini of peptides. This Paracoccidioides brasiliensis (strain Pb18) protein is Probable Xaa-Pro aminopeptidase PEPP (PEPP).